The sequence spans 306 residues: Low-density lipoprotein receptor class A domain-containing protein 4 (306 aa).

Topologically, residues 1-64 (MPEAGFQATN…PPGIFNSELE (64 aa)) are lumenal. In terms of domain architecture, LDL-receptor class A spans 11–48 (AFTECKFTCTSGKCLYLGSLVCNQQNDCGDNSDEENCL). Intrachain disulfides connect Cys19–Cys38 and Cys32–Cys47. A helical transmembrane segment spans residues 65–85 (FAQILIIVVVVTVMVVVVVCL). Residues 86–306 (LNHYKVSTRS…GKDRKPGDLV (221 aa)) lie on the Cytoplasmic side of the membrane. Positions 100–127 (PNQSQRQEDGLQPEGSLWPSDSSVQRPG) are disordered. The PPxY motif 1 motif lies at 180–183 (PPPY). An SMAD interaction motif (SIM) motif is present at residues 208-211 (PPNR). The PPxY motif 2 signature appears at 252-255 (PPTY). The tract at residues 268 to 306 (FHHQHSNTHRGSRPQFQPNNSEGTIVPIKGKDRKPGDLV) is disordered. The span at 269-279 (HHQHSNTHRGS) shows a compositional bias: basic residues. Residues 281-290 (PQFQPNNSEG) are compositionally biased toward polar residues. A compositionally biased stretch (basic and acidic residues) spans 296–306 (KGKDRKPGDLV).

Belongs to the PMEPA1 family. As to quaternary structure, interacts with PMEPA1. Interacts (via the SMAD interaction motif) with SMAD2 and SMAD3. As to expression, detected in all tissues tested.

It is found in the early endosome membrane. Functions as a negative regulator of TGF-beta signaling and thereby probably plays a role in cell proliferation, differentiation, apoptosis, motility, extracellular matrix production and immunosuppression. In the canonical TGF-beta pathway, ZFYVE9/SARA recruits the intracellular signal transducer and transcriptional modulators SMAD2 and SMAD3 to the TGF-beta receptor. Phosphorylated by the receptor, SMAD2 and SMAD3 then form a heteromeric complex with SMAD4 that translocates to the nucleus to regulate transcription. Through interaction with SMAD2 and SMAD3, LDLRAD4 may compete with ZFYVE9 and SMAD4 and prevent propagation of the intracellular signal. The polypeptide is Low-density lipoprotein receptor class A domain-containing protein 4 (Ldlrad4) (Mus musculus (Mouse)).